The primary structure comprises 125 residues: Holo-[acyl-carrier-protein] synthase (125 aa).

Residues Asp-8 and Glu-57 each contribute to the Mg(2+) site.

The protein belongs to the P-Pant transferase superfamily. AcpS family. The cofactor is Mg(2+).

Its subcellular location is the cytoplasm. The enzyme catalyses apo-[ACP] + CoA = holo-[ACP] + adenosine 3',5'-bisphosphate + H(+). Its function is as follows. Transfers the 4'-phosphopantetheine moiety from coenzyme A to a Ser of acyl-carrier-protein. The chain is Holo-[acyl-carrier-protein] synthase from Nitrosospira multiformis (strain ATCC 25196 / NCIMB 11849 / C 71).